Consider the following 187-residue polypeptide: Elongation factor P (187 aa).

This sequence belongs to the elongation factor P family.

The protein localises to the cytoplasm. Its pathway is protein biosynthesis; polypeptide chain elongation. Involved in peptide bond synthesis. Stimulates efficient translation and peptide-bond synthesis on native or reconstituted 70S ribosomes in vitro. Probably functions indirectly by altering the affinity of the ribosome for aminoacyl-tRNA, thus increasing their reactivity as acceptors for peptidyl transferase. The sequence is that of Elongation factor P from Mycolicibacterium gilvum (strain PYR-GCK) (Mycobacterium gilvum (strain PYR-GCK)).